A 219-amino-acid polypeptide reads, in one-letter code: uncharacterized protein (219 aa).

Phosphoserine is present on Ser23. A Glycyl lysine isopeptide (Lys-Gly) (interchain with G-Cter in SUMO) cross-link involves residue Lys137.

It localises to the cytoplasm. This is an uncharacterized protein from Saccharomyces cerevisiae (strain ATCC 204508 / S288c) (Baker's yeast).